A 517-amino-acid polypeptide reads, in one-letter code: Keratin-associated protein 16-1 (517 aa).

11 repeat units span residues 73–77 (CCDPV), 93–97 (CCEAT), 128–132 (CCQPV), 153–157 (CCEPA), 168–172 (CCQPV), 198–202 (CCQPV), 208–212 (CCSAV), 228–232 (CCQPV), 248–252 (CCDPS), 283–287 (CCVQS), and 303–307 (CCVSS). The tract at residues 73 to 307 (CCDPVICEPS…CQEPSCCVSS (235 aa)) is 11 X 5 AA repeats of C-C-X(3). The disordered stretch occupies residues 483–517 (VSEEAPCQPTEAKPISPTTREAAAAQPAASKPANC). The span at 504–517 (AAAAQPAASKPANC) shows a compositional bias: low complexity.

Belongs to the KRTAP type 16 family.

The chain is Keratin-associated protein 16-1 (KRTAP16-1) from Homo sapiens (Human).